Here is a 550-residue protein sequence, read N- to C-terminus: Luciferin 4-monooxygenase (550 aa).

The Microbody targeting signal signature appears at Ser548–Leu550.

The protein belongs to the ATP-dependent AMP-binding enzyme family. Mg(2+) serves as cofactor.

Its subcellular location is the peroxisome. It carries out the reaction firefly D-luciferin + ATP + O2 = firefly oxyluciferin + hnu + AMP + CO2 + diphosphate. In terms of biological role, produces green light with a wavelength of 562 nm. The protein is Luciferin 4-monooxygenase of Photinus pyralis (Common eastern firefly).